The primary structure comprises 403 residues: Alpha-1-antiproteinase F (403 aa).

An N-terminal signal peptide occupies residues 1-22 (SAIPRGLLLLAGLCCLVFGIMA). N-linked (GlcNAc...) asparagine glycans are attached at residues asparagine 55, asparagine 92, asparagine 155, asparagine 222, and asparagine 256. The RCL stretch occupies residues 358 to 377 (GATELEITPHSVPQDLFFNK).

This sequence belongs to the serpin family.

It localises to the secreted. Inhibits elastase, chymotrypsin, cathepsin G, plasmin, and trypsin. This is Alpha-1-antiproteinase F from Cavia porcellus (Guinea pig).